Consider the following 241-residue polypeptide: 1-(5-phosphoribosyl)-5-[(5-phosphoribosylamino)methylideneamino] imidazole-4-carboxamide isomerase (241 aa).

D8 functions as the Proton acceptor in the catalytic mechanism. Residue D129 is the Proton donor of the active site.

It belongs to the HisA/HisF family.

The protein localises to the cytoplasm. The enzyme catalyses 1-(5-phospho-beta-D-ribosyl)-5-[(5-phospho-beta-D-ribosylamino)methylideneamino]imidazole-4-carboxamide = 5-[(5-phospho-1-deoxy-D-ribulos-1-ylimino)methylamino]-1-(5-phospho-beta-D-ribosyl)imidazole-4-carboxamide. It participates in amino-acid biosynthesis; L-histidine biosynthesis; L-histidine from 5-phospho-alpha-D-ribose 1-diphosphate: step 4/9. The protein is 1-(5-phosphoribosyl)-5-[(5-phosphoribosylamino)methylideneamino] imidazole-4-carboxamide isomerase of Novosphingobium aromaticivorans (strain ATCC 700278 / DSM 12444 / CCUG 56034 / CIP 105152 / NBRC 16084 / F199).